Here is a 302-residue protein sequence, read N- to C-terminus: 4-hydroxy-tetrahydrodipicolinate synthase (302 aa).

Threonine 46 lines the pyruvate pocket. Catalysis depends on tyrosine 134, which acts as the Proton donor/acceptor. Lysine 162 acts as the Schiff-base intermediate with substrate in catalysis. Valine 204 is a pyruvate binding site.

It belongs to the DapA family. In terms of assembly, homotetramer; dimer of dimers.

Its subcellular location is the cytoplasm. It catalyses the reaction L-aspartate 4-semialdehyde + pyruvate = (2S,4S)-4-hydroxy-2,3,4,5-tetrahydrodipicolinate + H2O + H(+). It functions in the pathway amino-acid biosynthesis; L-lysine biosynthesis via DAP pathway; (S)-tetrahydrodipicolinate from L-aspartate: step 3/4. Functionally, catalyzes the condensation of (S)-aspartate-beta-semialdehyde [(S)-ASA] and pyruvate to 4-hydroxy-tetrahydrodipicolinate (HTPA). This chain is 4-hydroxy-tetrahydrodipicolinate synthase, found in Xylella fastidiosa (strain Temecula1 / ATCC 700964).